Here is a 445-residue protein sequence, read N- to C-terminus: tRNA-2-methylthio-N(6)-dimethylallyladenosine synthase (445 aa).

The MTTase N-terminal domain occupies 2–117 (QGLYIKSYGC…LPELIVKARK (116 aa)). 6 residues coordinate [4Fe-4S] cluster: Cys-11, Cys-47, Cys-80, Cys-157, Cys-161, and Cys-164. In terms of domain architecture, Radical SAM core spans 143-374 (KNQKVSAFIS…QELVHKQQLE (232 aa)). Residues 377 to 441 (KKMIGETHPV…KNHLTGIIPH (65 aa)) form the TRAM domain.

It belongs to the methylthiotransferase family. MiaB subfamily. As to quaternary structure, monomer. Requires [4Fe-4S] cluster as cofactor.

Its subcellular location is the cytoplasm. The enzyme catalyses N(6)-dimethylallyladenosine(37) in tRNA + (sulfur carrier)-SH + AH2 + 2 S-adenosyl-L-methionine = 2-methylsulfanyl-N(6)-dimethylallyladenosine(37) in tRNA + (sulfur carrier)-H + 5'-deoxyadenosine + L-methionine + A + S-adenosyl-L-homocysteine + 2 H(+). Functionally, catalyzes the methylthiolation of N6-(dimethylallyl)adenosine (i(6)A), leading to the formation of 2-methylthio-N6-(dimethylallyl)adenosine (ms(2)i(6)A) at position 37 in tRNAs that read codons beginning with uridine. The chain is tRNA-2-methylthio-N(6)-dimethylallyladenosine synthase from Ehrlichia ruminantium (strain Gardel).